A 68-amino-acid polypeptide reads, in one-letter code: Large ribosomal subunit protein bL31 (68 aa).

Residues Cys-16, Cys-18, Cys-36, and Cys-39 each contribute to the Zn(2+) site.

It belongs to the bacterial ribosomal protein bL31 family. Type A subfamily. In terms of assembly, part of the 50S ribosomal subunit. It depends on Zn(2+) as a cofactor.

In terms of biological role, binds the 23S rRNA. The polypeptide is Large ribosomal subunit protein bL31 (Dictyoglomus thermophilum (strain ATCC 35947 / DSM 3960 / H-6-12)).